We begin with the raw amino-acid sequence, 538 residues long: MPEIGVRNGAFGADKFGLQNLKAVYWNPGAPQLYEHALRSGEAMVNADGALCAETGIFTGRSPKDKFTVRDAATDKSVWWAGNQSMTPDQFAALYSDFLAHARNMTLFAQDLYGGADPNFRIKTRVFTELAWHSLFIRTLLRRPETSELAAFVPELTVIDLPSFRADPQRHGVRSENVVAIDFTRRIILIGGSHYAGEMKKSIFTTLNYYLPDQDVLPMHCSANVGPGGDSAIFFGLSGTGKTTLSADPGRTLIGDDEHGWSKDGIFNFEGGCYAKCIRLSREAEPEIYAASKRFGAVLENVVHDEVTRVPDFNDGSKTENTRSAYPLEFIPNASLTGCAGQPKNLVMLAADAFGVLPPIARLTPAQAMYHFLSGYTAKVAGTERDLGNEPQPEFSACFGSPFLPRHPGVYGNMLRALIAKHNVDCWLVNTGWTGGKYGTGRRMPIKVTRALLGAALDGSLRGVPFHDDRYFGFAVPTSVPGVEPHILDPIRTWADKIEFDRTARALIGMFRQNFTKFENDVDAEVREAAPGTMMAAE.

Arginine 61, tyrosine 195, and lysine 201 together coordinate substrate. Residues lysine 201, histidine 220, and 236 to 244 each bind ATP; that span reads GLSGTGKTT. Mn(2+)-binding residues include lysine 201 and histidine 220. Residue aspartate 257 participates in Mn(2+) binding. The ATP site is built by glutamate 285, arginine 323, and threonine 449. Residue arginine 323 participates in substrate binding.

The protein belongs to the phosphoenolpyruvate carboxykinase (ATP) family. Mn(2+) is required as a cofactor.

It localises to the cytoplasm. It catalyses the reaction oxaloacetate + ATP = phosphoenolpyruvate + ADP + CO2. It participates in carbohydrate biosynthesis; gluconeogenesis. Its function is as follows. Involved in the gluconeogenesis. Catalyzes the conversion of oxaloacetate (OAA) to phosphoenolpyruvate (PEP) through direct phosphoryl transfer between the nucleoside triphosphate and OAA. The chain is Phosphoenolpyruvate carboxykinase (ATP) from Nitrobacter winogradskyi (strain ATCC 25391 / DSM 10237 / CIP 104748 / NCIMB 11846 / Nb-255).